The following is a 224-amino-acid chain: A-type ATP synthase subunit D (224 aa).

The span at 200–209 shows a compositional bias: basic and acidic residues; the sequence is KKVKDKKEAQ. The segment at 200 to 224 is disordered; that stretch reads KKVKDKKEAQEEAADEAAAAESTGA. Residues 215 to 224 are compositionally biased toward low complexity; that stretch reads EAAAAESTGA.

It belongs to the V-ATPase D subunit family. Has multiple subunits with at least A(3), B(3), C, D, E, F, H, I and proteolipid K(x).

Its subcellular location is the cell membrane. Its function is as follows. Component of the A-type ATP synthase that produces ATP from ADP in the presence of a proton gradient across the membrane. The sequence is that of A-type ATP synthase subunit D from Halobacterium salinarum (strain ATCC 29341 / DSM 671 / R1).